We begin with the raw amino-acid sequence, 375 residues long: Period circadian protein (375 aa).

3 disordered regions span residues Thr28–Pro118, Lys140–Glu189, and Cys220–Ala254. Positions Ser69–Thr91 are enriched in low complexity. A compositionally biased stretch (gly residues) spans Gly92–Asn113. Basic and acidic residues predominate over residues Arg145–Ala156. A compositionally biased stretch (gly residues) spans Gly224–Gly243. Positions Asn245–Ala254 are enriched in polar residues.

In terms of assembly, forms a heterodimer with timeless (TIM); the complex then translocates into the nucleus. In terms of processing, phosphorylated with a circadian rhythmicity, probably by the double-time protein (dbt). Phosphorylation could be implicated in the stability of per monomer and in the formation of heterodimer per-tim.

It localises to the nucleus. It is found in the cytoplasm. Its subcellular location is the perinuclear region. Essential for biological clock functions. Determines the period length of circadian and ultradian rhythms; an increase in PER dosage leads to shortened circadian rhythms and a decrease leads to lengthened circadian rhythms. Essential for the circadian rhythmicity of locomotor activity, eclosion behavior, and for the rhythmic component of the male courtship song that originates in the thoracic nervous system. The biological cycle depends on the rhythmic formation and nuclear localization of the TIM-PER complex. Light induces the degradation of TIM, which promotes elimination of PER. Nuclear activity of the heterodimer coordinatively regulates PER and TIM transcription through a negative feedback loop. Behaves as a negative element in circadian transcriptional loop. Does not appear to bind DNA, suggesting indirect transcriptional inhibition. In Drosophila capricorni (Fruit fly), this protein is Period circadian protein (per).